The sequence spans 342 residues: RNA 3'-terminal phosphate cyclase (342 aa).

ATP-binding positions include Gln103 and 283-287 (YLADQ). Catalysis depends on His308, which acts as the Tele-AMP-histidine intermediate.

This sequence belongs to the RNA 3'-terminal cyclase family. Type 1 subfamily.

It is found in the cytoplasm. The catalysed reaction is a 3'-end 3'-phospho-ribonucleotide-RNA + ATP = a 3'-end 2',3'-cyclophospho-ribonucleotide-RNA + AMP + diphosphate. In terms of biological role, catalyzes the conversion of 3'-phosphate to a 2',3'-cyclic phosphodiester at the end of RNA. The mechanism of action of the enzyme occurs in 3 steps: (A) adenylation of the enzyme by ATP; (B) transfer of adenylate to an RNA-N3'P to produce RNA-N3'PP5'A; (C) and attack of the adjacent 2'-hydroxyl on the 3'-phosphorus in the diester linkage to produce the cyclic end product. The biological role of this enzyme is unknown but it is likely to function in some aspects of cellular RNA processing. The polypeptide is RNA 3'-terminal phosphate cyclase (rtcA) (Escherichia coli O157:H7).